We begin with the raw amino-acid sequence, 345 residues long: Heat-inducible transcription repressor HrcA (345 aa).

It belongs to the HrcA family.

In terms of biological role, negative regulator of class I heat shock genes (grpE-dnaK-dnaJ and groELS operons). Prevents heat-shock induction of these operons. The protein is Heat-inducible transcription repressor HrcA of Desulfitobacterium hafniense (strain DSM 10664 / DCB-2).